The chain runs to 166 residues: NAD(P)H-quinone oxidoreductase subunit I, chloroplastic (166 aa).

4Fe-4S ferredoxin-type domains follow at residues glycine 55 to lysine 84 and leucine 95 to glutamate 124. Residues cysteine 64, cysteine 67, cysteine 70, cysteine 74, cysteine 104, cysteine 107, cysteine 110, and cysteine 114 each contribute to the [4Fe-4S] cluster site.

This sequence belongs to the complex I 23 kDa subunit family. As to quaternary structure, NDH is composed of at least 16 different subunits, 5 of which are encoded in the nucleus. Requires [4Fe-4S] cluster as cofactor.

The protein localises to the plastid. Its subcellular location is the chloroplast thylakoid membrane. The catalysed reaction is a plastoquinone + NADH + (n+1) H(+)(in) = a plastoquinol + NAD(+) + n H(+)(out). It carries out the reaction a plastoquinone + NADPH + (n+1) H(+)(in) = a plastoquinol + NADP(+) + n H(+)(out). Functionally, NDH shuttles electrons from NAD(P)H:plastoquinone, via FMN and iron-sulfur (Fe-S) centers, to quinones in the photosynthetic chain and possibly in a chloroplast respiratory chain. The immediate electron acceptor for the enzyme in this species is believed to be plastoquinone. Couples the redox reaction to proton translocation, and thus conserves the redox energy in a proton gradient. The protein is NAD(P)H-quinone oxidoreductase subunit I, chloroplastic of Perymeniopsis ovalifolia.